We begin with the raw amino-acid sequence, 501 residues long: Glycerol kinase (501 aa).

An ADP-binding site is contributed by Thr-12. Residues Thr-12, Thr-13, and Ser-14 each contribute to the ATP site. Thr-12 contacts sn-glycerol 3-phosphate. An ADP-binding site is contributed by Arg-16. The sn-glycerol 3-phosphate site is built by Arg-82, Glu-83, Tyr-134, and Asp-244. Glycerol-binding residues include Arg-82, Glu-83, Tyr-134, Asp-244, and Gln-245. ADP-binding residues include Thr-266 and Gly-310. Positions 266, 310, 314, and 411 each coordinate ATP. ADP is bound by residues Gly-411 and Asn-415.

Belongs to the FGGY kinase family.

It catalyses the reaction glycerol + ATP = sn-glycerol 3-phosphate + ADP + H(+). It functions in the pathway polyol metabolism; glycerol degradation via glycerol kinase pathway; sn-glycerol 3-phosphate from glycerol: step 1/1. With respect to regulation, inhibited by fructose 1,6-bisphosphate (FBP). Its function is as follows. Key enzyme in the regulation of glycerol uptake and metabolism. Catalyzes the phosphorylation of glycerol to yield sn-glycerol 3-phosphate. This is Glycerol kinase from Methylorubrum populi (strain ATCC BAA-705 / NCIMB 13946 / BJ001) (Methylobacterium populi).